A 36-amino-acid chain; its full sequence is Thrombin-like enzyme TLP (36 aa).

In terms of domain architecture, Peptidase S1 spans 1 to 36 (IGGFECNEHEHRSLVYLYNSAGFFCAGTLLNHEWVV).

It belongs to the peptidase S1 family. Snake venom subfamily. In terms of assembly, monomer. As to expression, expressed by the venom gland.

The protein resides in the secreted. Functionally, thrombin-like snake venom serine protease. Shows strong hydrolytic activity towards Boc-Asp(oBzl)-Pro-Arg-MCA, a synthetic substrate for thrombin. The protein is Thrombin-like enzyme TLP of Naja naja (Indian cobra).